The sequence spans 256 residues: Small ribosomal subunit protein uS2 (256 aa).

Belongs to the universal ribosomal protein uS2 family.

This chain is Small ribosomal subunit protein uS2, found in Streptococcus agalactiae serotype Ia (strain ATCC 27591 / A909 / CDC SS700).